The primary structure comprises 580 residues: NADH-quinone oxidoreductase subunit C/D (580 aa).

Residues 1 to 171 (MSLDQAIPEA…PPFVLTDRLF (171 aa)) are NADH dehydrogenase I subunit C. The NADH dehydrogenase I subunit D stretch occupies residues 195–580 (ELMVLNFGPH…IDFVMSDVDR (386 aa)).

The protein in the N-terminal section; belongs to the complex I 30 kDa subunit family. It in the C-terminal section; belongs to the complex I 49 kDa subunit family. As to quaternary structure, NDH-1 is composed of 13 different subunits. Subunits NuoB, CD, E, F, and G constitute the peripheral sector of the complex.

Its subcellular location is the cell inner membrane. The enzyme catalyses a quinone + NADH + 5 H(+)(in) = a quinol + NAD(+) + 4 H(+)(out). Functionally, NDH-1 shuttles electrons from NADH, via FMN and iron-sulfur (Fe-S) centers, to quinones in the respiratory chain. The immediate electron acceptor for the enzyme in this species is believed to be ubiquinone. Couples the redox reaction to proton translocation (for every two electrons transferred, four hydrogen ions are translocated across the cytoplasmic membrane), and thus conserves the redox energy in a proton gradient. This chain is NADH-quinone oxidoreductase subunit C/D, found in Cereibacter sphaeroides (strain ATCC 17029 / ATH 2.4.9) (Rhodobacter sphaeroides).